A 508-amino-acid chain; its full sequence is 2,3-bisphosphoglycerate-independent phosphoglycerate mutase (508 aa).

The Mn(2+) site is built by Asp13 and Ser63. Catalysis depends on Ser63, which acts as the Phosphoserine intermediate. Residues His122, 152–153 (RD), Arg184, Arg190, 256–259 (RADR), and Lys330 contribute to the substrate site. Residues Asp397, His401, Asp438, His439, and His457 each contribute to the Mn(2+) site.

This sequence belongs to the BPG-independent phosphoglycerate mutase family. In terms of assembly, monomer. Requires Mn(2+) as cofactor.

The catalysed reaction is (2R)-2-phosphoglycerate = (2R)-3-phosphoglycerate. Its pathway is carbohydrate degradation; glycolysis; pyruvate from D-glyceraldehyde 3-phosphate: step 3/5. Functionally, catalyzes the interconversion of 2-phosphoglycerate and 3-phosphoglycerate. The polypeptide is 2,3-bisphosphoglycerate-independent phosphoglycerate mutase (Laribacter hongkongensis (strain HLHK9)).